Consider the following 403-residue polypeptide: Aspartic protease pepA (403 aa).

A signal peptide spans 1 to 20; the sequence is MVLITQLGAALAVFSALTVA. Residues 21-67 constitute a propeptide, activation peptide; it reads APTKGKARFSAPQVGIPKKAKHHPAAAYARALHKFGMKIPKAVSDAA. The 319-residue stretch at 82–400 folds into the Peptidase A1 domain; that stretch reads YVTQVTVGGS…DTQGPRIGFA (319 aa). Asp98 is an active-site residue. A glycan (N-linked (GlcNAc...) asparagine) is linked at Asn270. The active site involves Asp293. The cysteines at positions 329 and 362 are disulfide-linked.

This sequence belongs to the peptidase A1 family. In terms of assembly, monomer.

It localises to the secreted. Its function is as follows. Secreted aspartic endopeptidase that allows assimilation of proteinaceous substrates. The scissile peptide bond is attacked by a nucleophilic water molecule activated by two aspartic residues in the active site. Shows a broad primary substrate specificity. Favors hydrophobic residues at the P1 and P1' positions. The chain is Aspartic protease pepA from Arthroderma gypseum (strain ATCC MYA-4604 / CBS 118893) (Microsporum gypseum).